We begin with the raw amino-acid sequence, 1169 residues long: Chromosome partition protein Smc (1169 aa).

32–39 (PNGSGKSN) serves as a coordination point for ATP. Residues 166-507 (DEISGIAEFD…RIKALKEMEE (342 aa)) are a coiled coil. In terms of domain architecture, SMC hinge spans 523-636 (PGIIDIVGNL…ENIDIAKELA (114 aa)). Positions 676-1030 (SKLNKIADEI…NKKKEVFMEV (355 aa)) form a coiled coil.

Belongs to the SMC family. In terms of assembly, homodimer.

Its subcellular location is the cytoplasm. Functionally, required for chromosome condensation and partitioning. The sequence is that of Chromosome partition protein Smc from Methanocaldococcus jannaschii (strain ATCC 43067 / DSM 2661 / JAL-1 / JCM 10045 / NBRC 100440) (Methanococcus jannaschii).